We begin with the raw amino-acid sequence, 376 residues long: Erythronate-4-phosphate dehydrogenase (376 aa).

Residues S45 and T67 each contribute to the substrate site. Position 147 (D147) interacts with NAD(+). R209 is an active-site residue. D233 lines the NAD(+) pocket. Residue E238 is part of the active site. H255 functions as the Proton donor in the catalytic mechanism. Residue G258 coordinates NAD(+). A substrate-binding site is contributed by Y259.

This sequence belongs to the D-isomer specific 2-hydroxyacid dehydrogenase family. PdxB subfamily. As to quaternary structure, homodimer.

The protein resides in the cytoplasm. It carries out the reaction 4-phospho-D-erythronate + NAD(+) = (R)-3-hydroxy-2-oxo-4-phosphooxybutanoate + NADH + H(+). It participates in cofactor biosynthesis; pyridoxine 5'-phosphate biosynthesis; pyridoxine 5'-phosphate from D-erythrose 4-phosphate: step 2/5. In terms of biological role, catalyzes the oxidation of erythronate-4-phosphate to 3-hydroxy-2-oxo-4-phosphonooxybutanoate. The protein is Erythronate-4-phosphate dehydrogenase of Shewanella sp. (strain MR-7).